A 92-amino-acid chain; its full sequence is Small ribosomal subunit protein uS19 (92 aa).

This sequence belongs to the universal ribosomal protein uS19 family.

Functionally, protein S19 forms a complex with S13 that binds strongly to the 16S ribosomal RNA. This is Small ribosomal subunit protein uS19 from Agrobacterium fabrum (strain C58 / ATCC 33970) (Agrobacterium tumefaciens (strain C58)).